We begin with the raw amino-acid sequence, 309 residues long: Vacuolar membrane protein YOR292C (309 aa).

Over 1–52 (MPLQLFGRDQIVVHYDNGNMSNDDQNHQSVLGSWTRRAAAALRTLMNKRIQR) the chain is Vacuolar. N-linked (GlcNAc...) asparagine glycosylation is present at N19. A helical membrane pass occupies residues 53–73 (ITLTHWLLLVIWVTSLWKFTS). At 74–81 (HYRQLYAN) the chain is on the cytoplasmic side. A helical membrane pass occupies residues 82 to 102 (SAVFATLCTNILLFGISDILA). Residues 103–183 (QSIACFYSYH…KTDTFDFFRW (81 aa)) lie on the Vacuolar side of the membrane. Residue N121 is glycosylated (N-linked (GlcNAc...) asparagine). A helical membrane pass occupies residues 184–204 (GCFMFWGFFISFFQAPWYKFL). The Cytoplasmic portion of the chain corresponds to 205 to 225 (NFFYTEDPTVVQVFERVLSDQ). Residues 226–246 (LLYSPISLYCFFMFSNYVMEG) form a helical membrane-spanning segment. At 247–260 (GDKDTLGKKIQRLY) the chain is on the vacuolar side. The helical transmembrane segment at 261-281 (ISTLGCNYLVWPMVQFINFLI) threads the bilayer. Residues 282–309 (MPRDFQAPFSSSVGVVWNCFLSMRNASK) lie on the Cytoplasmic side of the membrane.

The protein belongs to the peroxisomal membrane protein PXMP2/4 family. In terms of processing, N-glycosylated.

The protein localises to the vacuole membrane. In Saccharomyces cerevisiae (strain ATCC 204508 / S288c) (Baker's yeast), this protein is Vacuolar membrane protein YOR292C.